The primary structure comprises 1099 residues: Inverted formin-2 (1099 aa).

The GBD/FH3 domain occupies 1–330; it reads MSLTEGAHTK…RAVLLADDCQ (330 aa). Basic and acidic residues-rich tracts occupy residues 348–359 and 367–385; these read SSKEKRKTDKCT and QTDK…KKDP. 3 disordered regions span residues 348–391, 432–509, and 1000–1019; these read SSKE…SGIP, PSPP…PTPP, and AEKR…KGEN. One can recognise an FH1 domain in the interval 426 to 569; the sequence is TCSSVLPSPP…GMLPPPPPLP (144 aa). The segment covering 452-499 has biased composition (pro residues); it reads PLPPPPPPLPGTELSPPPPGMVALSLPPPPPPLPGMGGMLPPPPPPLP. The region spanning 621–1009 is the FH2 domain; it reads FLKVNKPTLK…AEKRKQQIAD (389 aa). Residues 907-1019 adopt a coiled-coil conformation; sequence LKKLRDLQNK…EETKRQKGEN (113 aa). Residues 1037-1052 enclose the WH2 domain; that stretch reads DDLLADIKKGFQLRKT. Positions 1064 to 1085 are disordered; that stretch reads KTLSSETNRTDIQHVGKRPEVP. Positions 1071-1083 are enriched in basic and acidic residues; sequence NRTDIQHVGKRPE.

Belongs to the formin homology family.

The sequence is that of Inverted formin-2 (inf2) from Xenopus laevis (African clawed frog).